Reading from the N-terminus, the 1328-residue chain is ABC transporter G family member 2 (1328 aa).

Residues 53–299 form the ABC transporter 1 domain; that stretch reads VTARNLSMSI…FEGLGFKLPK (247 aa). Residue 91-98 coordinates ATP; the sequence is GSPGCGKT. Positions 388–665 constitute an ABC transmembrane type-2 1 domain; the sequence is ISSQVAVRMR…FGMYFFLKNV (278 aa). A run of 7 helical transmembrane segments spans residues 398-418, 428-448, 477-497, 504-524, 534-554, 559-579, and 642-662; these read IIKSIVMGLILGSLFYGLDLN, LIFFSLLFIVFSGMGAIAILF, IPIALLETVVFCVLVYWMCGL, FIYFLLMNFVGDLAFQSFFKM, LASVIAPAALAPFILFSGFMA, IGGWWIWIYWISPIKYAFEGL, and IDLLIVFAFGALFSFGMYFFL. The segment at 670 to 691 is disordered; it reads RASDPKNDKRSKKASKRSKKIK. Basic residues predominate over residues 678-689; sequence KRSKKASKRSKK. Residues 721-960 form the ABC transporter 2 domain; that stretch reads VYEVDVKKDG…DLLGYFENHG (240 aa). 755–762 lines the ATP pocket; sequence GPSGAGKS. In terms of domain architecture, ABC transmembrane type-2 2 spans 1049–1286; sequence VRRVQNIRTR…PICPITNGNQ (238 aa). A run of 6 helical transmembrane segments spans residues 1059–1076, 1087–1107, 1128–1148, 1172–1192, 1197–1217, and 1303–1323; these read LMRSLFLGVVLGTLFVRM, VSILFFSLMFGGMSGMSSIPI, IYLFTFIVTDLPWVFLSAIIY, FISFTTYFNFSMLAMVFATVL, IAHALGGVALSISSLFAGFMI, and AVIFGYSVFFFICIFIALKFI.

Belongs to the ABC transporter superfamily. ABCG family. PDR (TC 3.A.1.205) subfamily.

It localises to the endosome membrane. Its function is as follows. Required for endocytosis and endosomal pH regulation. This is ABC transporter G family member 2 (abcG2) from Dictyostelium discoideum (Social amoeba).